The chain runs to 442 residues: Cysteine proteinase 4 (442 aa).

Residues 1–17 form the signal peptide; sequence MRVLSFLCLLLVSYASA. A propeptide spans 18 to 111 (activation peptide); that stretch reads KQQFSELQYR…TEEEKIFSTP (94 aa). Intrachain disulfides connect Cys-132/Cys-178 and Cys-169/Cys-212. Residue Cys-135 is part of the active site. N-linked (GlcNAc...) asparagine glycans are attached at residues Asn-228 and Asn-254. Cys-270 and Cys-428 are joined by a disulfide. His-277 is a catalytic residue. A disordered region spans residues 286–396; it reads SGSSSSSGSS…SGSGSGAVEA (111 aa). Residues 287–376 show a composition bias toward low complexity; that stretch reads GSSSSSGSSS…SASGQASASG (90 aa). Residues 377-391 show a composition bias toward gly residues; the sequence is SGSGSGSGSGSGSGS. Residue Asn-406 is part of the active site.

It belongs to the peptidase C1 family. In terms of processing, glycosylated; contains GlcNAc-alpha-1-P-Ser residues and fucose.

Its subcellular location is the lysosome. The polypeptide is Cysteine proteinase 4 (cprD) (Dictyostelium discoideum (Social amoeba)).